Reading from the N-terminus, the 69-residue chain is Large ribosomal subunit protein bL31 (69 aa).

The Zn(2+) site is built by Cys16, Cys18, Cys38, and Cys41.

It belongs to the bacterial ribosomal protein bL31 family. Type A subfamily. In terms of assembly, part of the 50S ribosomal subunit. The cofactor is Zn(2+).

Binds the 23S rRNA. This is Large ribosomal subunit protein bL31 from Cutibacterium acnes (strain DSM 16379 / KPA171202) (Propionibacterium acnes).